The primary structure comprises 456 residues: Bifunctional protein GlmU (456 aa).

Residues 1 to 229 (MLNSAMSVVI…ISETDGVNNR (229 aa)) are pyrophosphorylase. UDP-N-acetyl-alpha-D-glucosamine-binding positions include 11-14 (LAAG), Lys25, Gln76, 81-82 (GT), 103-105 (YGD), Gly140, Glu154, Asn169, and Asn227. Asp105 contributes to the Mg(2+) binding site. Asn227 is a Mg(2+) binding site. The segment at 230–250 (LQLSRLERIYQAEQAEKLLLS) is linker. An N-acetyltransferase region spans residues 251-456 (GVMLRDPARF…QGWQRPVKKK (206 aa)). Residues Arg333 and Lys351 each coordinate UDP-N-acetyl-alpha-D-glucosamine. The active-site Proton acceptor is the His363. Residues Tyr366 and Asn377 each contribute to the UDP-N-acetyl-alpha-D-glucosamine site. Acetyl-CoA-binding positions include Ala380, 386 to 387 (NY), Ser405, Ala423, and Arg440.

In the N-terminal section; belongs to the N-acetylglucosamine-1-phosphate uridyltransferase family. The protein in the C-terminal section; belongs to the transferase hexapeptide repeat family. In terms of assembly, homotrimer. It depends on Mg(2+) as a cofactor.

The protein localises to the cytoplasm. The catalysed reaction is alpha-D-glucosamine 1-phosphate + acetyl-CoA = N-acetyl-alpha-D-glucosamine 1-phosphate + CoA + H(+). The enzyme catalyses N-acetyl-alpha-D-glucosamine 1-phosphate + UTP + H(+) = UDP-N-acetyl-alpha-D-glucosamine + diphosphate. It functions in the pathway nucleotide-sugar biosynthesis; UDP-N-acetyl-alpha-D-glucosamine biosynthesis; N-acetyl-alpha-D-glucosamine 1-phosphate from alpha-D-glucosamine 6-phosphate (route II): step 2/2. It participates in nucleotide-sugar biosynthesis; UDP-N-acetyl-alpha-D-glucosamine biosynthesis; UDP-N-acetyl-alpha-D-glucosamine from N-acetyl-alpha-D-glucosamine 1-phosphate: step 1/1. The protein operates within bacterial outer membrane biogenesis; LPS lipid A biosynthesis. Its function is as follows. Catalyzes the last two sequential reactions in the de novo biosynthetic pathway for UDP-N-acetylglucosamine (UDP-GlcNAc). The C-terminal domain catalyzes the transfer of acetyl group from acetyl coenzyme A to glucosamine-1-phosphate (GlcN-1-P) to produce N-acetylglucosamine-1-phosphate (GlcNAc-1-P), which is converted into UDP-GlcNAc by the transfer of uridine 5-monophosphate (from uridine 5-triphosphate), a reaction catalyzed by the N-terminal domain. The chain is Bifunctional protein GlmU from Salmonella typhi.